The following is a 354-amino-acid chain: Uroporphyrinogen decarboxylase (354 aa).

Substrate-binding positions include 27 to 31, aspartate 77, tyrosine 154, serine 209, and histidine 327; that span reads RQAGR.

It belongs to the uroporphyrinogen decarboxylase family. As to quaternary structure, homodimer.

The protein localises to the cytoplasm. The catalysed reaction is uroporphyrinogen III + 4 H(+) = coproporphyrinogen III + 4 CO2. Its pathway is porphyrin-containing compound metabolism; protoporphyrin-IX biosynthesis; coproporphyrinogen-III from 5-aminolevulinate: step 4/4. Its function is as follows. Catalyzes the decarboxylation of four acetate groups of uroporphyrinogen-III to yield coproporphyrinogen-III. The sequence is that of Uroporphyrinogen decarboxylase from Methylobacillus flagellatus (strain ATCC 51484 / DSM 6875 / VKM B-1610 / KT).